The following is a 352-amino-acid chain: MTATLERRESASLWGRFCDWVTSTENRLYIGWFGVIMIPTLLTATSVFIIAFIAAPPVDIDGIREPVAGSLLFGNNIISGAIVPTSAAIGLHFYPIWEAASVDEWLYNGGPYELIVLHFLLGVCCYMGREWELSFRLGMRPWIAVAYSAPVAAATAVFLIYPIGQGSFSDGMPLGISGTFNFMIVFQAEHNILMHPFHMLGVAGVFGGSLFSAMHGSLVTSSLIRETTENESANAGYKFGQEEETYNIVAAHGYFGRLIFQYASFNNSRSLHFFLAAWPVVGIWFTALGVSTMAFNLNGFNFNQSVVDSQGRVINTWADIINRANLGMEVMHERNAHNFPLDLASVEAPVVG.

Position 2 is an N-acetylthreonine (threonine 2). Threonine 2 is subject to Phosphothreonine. The next 3 helical transmembrane spans lie at 29 to 46, 118 to 133, and 142 to 156; these read YIGW…TATS, HFLL…EWEL, and WIAV…AATA. Histidine 118 contributes to the chlorophyll a binding site. Pheophytin a is bound at residue tyrosine 126. [CaMn4O5] cluster-binding residues include aspartate 170 and glutamate 189. Residues 197–218 traverse the membrane as a helical segment; sequence FHMLGVAGVFGGSLFSAMHGSL. Histidine 198 is a binding site for chlorophyll a. A quinone-binding positions include histidine 215 and 264 to 265; that span reads SF. Histidine 215 is a binding site for Fe cation. Histidine 272 is a binding site for Fe cation. Residues 274-288 traverse the membrane as a helical segment; that stretch reads FLAAWPVVGIWFTAL. [CaMn4O5] cluster is bound by residues histidine 332, glutamate 333, aspartate 342, and alanine 344. Residues 345 to 352 constitute a propeptide that is removed on maturation; that stretch reads SVEAPVVG.

Belongs to the reaction center PufL/M/PsbA/D family. As to quaternary structure, PSII is composed of 1 copy each of membrane proteins PsbA, PsbB, PsbC, PsbD, PsbE, PsbF, PsbH, PsbI, PsbJ, PsbK, PsbL, PsbM, PsbT, PsbX, PsbY, PsbZ, Psb30/Ycf12, at least 3 peripheral proteins of the oxygen-evolving complex and a large number of cofactors. It forms dimeric complexes. The D1/D2 heterodimer binds P680, chlorophylls that are the primary electron donor of PSII, and subsequent electron acceptors. It shares a non-heme iron and each subunit binds pheophytin, quinone, additional chlorophylls, carotenoids and lipids. D1 provides most of the ligands for the Mn4-Ca-O5 cluster of the oxygen-evolving complex (OEC). There is also a Cl(-1) ion associated with D1 and D2, which is required for oxygen evolution. The PSII complex binds additional chlorophylls, carotenoids and specific lipids. is required as a cofactor. In terms of processing, tyr-161 forms a radical intermediate that is referred to as redox-active TyrZ, YZ or Y-Z. Post-translationally, C-terminally processed by CTPA; processing is essential to allow assembly of the oxygen-evolving complex and thus photosynthetic growth.

The protein resides in the plastid. It localises to the chloroplast thylakoid membrane. The enzyme catalyses 2 a plastoquinone + 4 hnu + 2 H2O = 2 a plastoquinol + O2. Photosystem II (PSII) is a light-driven water:plastoquinone oxidoreductase that uses light energy to abstract electrons from H(2)O, generating O(2) and a proton gradient subsequently used for ATP formation. It consists of a core antenna complex that captures photons, and an electron transfer chain that converts photonic excitation into a charge separation. The D1/D2 (PsbA/PsbD) reaction center heterodimer binds P680, the primary electron donor of PSII as well as several subsequent electron acceptors. This Zygnema circumcarinatum (Green alga) protein is Photosystem II protein D1.